The sequence spans 600 residues: Autophagy-related protein 22-2 (600 aa).

Residues 1 to 30 (MAFASPPASPPDEDGQARAPRYPGEDTTPT) are disordered. 4 helical membrane passes run 41 to 61 (YGIA…PLTL), 117 to 137 (SFAM…LISF), 149 to 168 (TLLV…FVFI), and 186 to 206 (CLGS…ASDP). The tract at residues 234 to 257 (SFDGDEPTHRPPTGLGLGGATGTS) is disordered. The next 4 helical transmembrane spans lie at 271–291 (GVGL…LLLF), 304–324 (TLPL…FTMV), 378–398 (VIVF…VSGT), and 414–434 (VALL…LWPI). Asparagine 444 is a glycosylation site (N-linked (GlcNAc...) asparagine). A run of 4 helical transmembrane segments spans residues 449–469 (VCIA…IPLF), 484–506 (YPLA…SFFG), 526–546 (KGSS…TGQV), and 549–569 (GFFF…MVDA).

Belongs to the ATG22 family.

It localises to the vacuole membrane. Vacuolar effluxer which mediate the efflux of amino acids resulting from autophagic degradation. The release of autophagic amino acids allows the maintenance of protein synthesis and viability during nitrogen starvation. This chain is Autophagy-related protein 22-2 (atg22-2), found in Aspergillus niger (strain ATCC MYA-4892 / CBS 513.88 / FGSC A1513).